A 442-amino-acid polypeptide reads, in one-letter code: Protein cereblon (442 aa).

The interval 1-45 is disordered; the sequence is MAGEGDQQDAAHNMGNHLPLLPAESEEEDEMEVEDQDSKEAKKPN. Residues 24 to 35 are compositionally biased toward acidic residues; it reads ESEEEDEMEVED. Position 25 is a phosphoserine (serine 25). The Lon N-terminal domain maps to 81–319; the sequence is IPVLPQVMMI…CELDIMNKCT (239 aa). The 109-residue stretch at 318–426 folds into the CULT domain; sequence CTSLCCKQCQ…LTRSALLPTI (109 aa). Zn(2+)-binding residues include cysteine 323 and cysteine 326. Histidine 378, tryptophan 380, and tryptophan 386 together coordinate (S)-thalidomide. Zn(2+)-binding residues include cysteine 391 and cysteine 394.

It belongs to the CRBN family. As to quaternary structure, interacts with KCNT1. Component of a DCX (DDB1-CUL4-X-box) protein ligase complex, at least composed of CRBN, CUL4A, DDB1 and RBX1. Interacts directly with DDB1. Interacts (in pomalidomide-bound form) with IKZF1 and IKZF3. Interacts with ILF2. Interacts with TRAF6 and ECSIT. Post-translationally, ubiquitinated, ubiquitination is mediated by its own DCX protein ligase complex. As to expression, widely expressed. Highly expressed in brain.

The protein localises to the cytoplasm. It localises to the nucleus. It is found in the membrane. Its pathway is protein modification; protein ubiquitination. Substrate recognition component of a DCX (DDB1-CUL4-X-box) E3 protein ligase complex that mediates the ubiquitination and subsequent proteasomal degradation of target proteins, such as MEIS2, ILF2 or GLUL. Normal degradation of key regulatory proteins is required for normal limb outgrowth and expression of the fibroblast growth factor FGF8. Maintains presynaptic glutamate release and consequently cognitive functions, such as memory and learning, by negatively regulating large-conductance calcium-activated potassium (BK) channels in excitatory neurons. Likely to function by regulating the assembly and neuronal surface expression of BK channels via its interaction with KCNT1. May also be involved in regulating anxiety-like behaviors via a BK channel-independent mechanism. Plays a negative role in TLR4 signaling by interacting with TRAF6 and ECSIT, leading to inhibition of ECSIT ubiquitination, an important step of the signaling. The sequence is that of Protein cereblon (CRBN) from Homo sapiens (Human).